A 130-amino-acid chain; its full sequence is L-ectoine synthase (130 aa).

It belongs to the ectoine synthase family.

It carries out the reaction (2S)-4-acetamido-2-aminobutanoate = L-ectoine + H2O. It participates in amine and polyamine biosynthesis; ectoine biosynthesis; L-ectoine from L-aspartate 4-semialdehyde: step 3/3. Its function is as follows. Catalyzes the circularization of gamma-N-acetyl-alpha,gamma-diaminobutyric acid (ADABA) to ectoine (1,4,5,6-tetrahydro-2-methyl-4-pyrimidine carboxylic acid), which is an excellent osmoprotectant. This Mycobacteroides abscessus (strain ATCC 19977 / DSM 44196 / CCUG 20993 / CIP 104536 / JCM 13569 / NCTC 13031 / TMC 1543 / L948) (Mycobacterium abscessus) protein is L-ectoine synthase.